Here is a 600-residue protein sequence, read N- to C-terminus: Polypeptide N-acetylgalactosaminyltransferase (600 aa).

The Cytoplasmic portion of the chain corresponds to methionine 1–arginine 7. A helical; Signal-anchor for type II membrane protein transmembrane segment spans residues leucine 8–aspartate 28. Topologically, residues aspartate 29–arginine 600 are lumenal. Intrachain disulfides connect cysteine 154/cysteine 382, cysteine 373/cysteine 451, cysteine 484/cysteine 501, cysteine 524/cysteine 541, and cysteine 567/cysteine 583. Residues leucine 163–arginine 268 are catalytic subdomain A. The substrate site is built by threonine 171, aspartate 204, and arginine 229. Aspartate 252 serves as a coordination point for Mn(2+). Position 253 (serine 253) interacts with substrate. Histidine 254 is a binding site for Mn(2+). A catalytic subdomain B region spans residues proline 328 to arginine 390. Tryptophan 359 is a binding site for substrate. Position 387 (histidine 387) interacts with Mn(2+). The substrate site is built by arginine 390, histidine 393, and tyrosine 395. In terms of domain architecture, Ricin B-type lectin spans lysine 466–serine 595.

It belongs to the glycosyltransferase 2 family. GalNAc-T subfamily. It depends on Mn(2+) as a cofactor. Post-translationally, O-glycosylated.

It is found in the golgi apparatus membrane. It catalyses the reaction L-seryl-[protein] + UDP-N-acetyl-alpha-D-galactosamine = a 3-O-[N-acetyl-alpha-D-galactosaminyl]-L-seryl-[protein] + UDP + H(+). The catalysed reaction is L-threonyl-[protein] + UDP-N-acetyl-alpha-D-galactosamine = a 3-O-[N-acetyl-alpha-D-galactosaminyl]-L-threonyl-[protein] + UDP + H(+). Its pathway is protein modification; protein glycosylation. With respect to regulation, no change in activity by addition of up to 10% methanol or glycerol, or 5% acetonitrile. 40% reduction in activity by 10% acetonitrile or by lyophilization. Activity requires divalent cations, the best being Mn(2+) (10-20 mM), followed by Co(2+), Mg(2+) and Ca(2+). Loss of activity with Cu(2+) or in the presence of EDTA. Inhibited by UDP, but not by UMP, UTP, ADP or GDP nucleotides. No inhibition by galactose, N-acetylglucosamine or N-acetylgalactosamine sugars. Catalyzes the initial reaction in O-linked oligosaccharide biosynthesis, the transfer of an N-acetyl-D-galactosamine residue to a serine or threonine residue on the protein receptor. Has a broad substrate specificity. Acceptor peptides include Muc2, Muc5Ac, Muc1a and Muc1a', with Muc2 as the best acceptor. Acts on non-glycosylated and mono- or multi-glycosylated peptide substrates. Transfers preferably to threonine rather than serine residue. Thr-15 is the most preferred site of glycosylation in Muc2 peptide PTTTPITTTTTVTPTPTPTGTQTK having proline residues at position -1, and at positions +1 and +3, where the number represents the distance from the C-terminal and N-terminal hydroxyl amino acid, respectively. Transfer of the N-acetyl-D-galactosamine (GalNAc) is optimal with proline residues at positions -3, -1, +1 and +3, but other amino acids are tolerated, although some, such as phenylalanine, isoleucine or leucine at -1, or lysine at +3 prevent the transfer completely. Second GalNAc is transferred to Muc2 Thr-2 or Thr-13, both of which have two proline residues nearby. Up to nine sites can be glycosylated within Muc2, but eight are used simultaneously since Thr-19 and Thr-21 are not detected to be glycosylated at the same time. Glycosylation is not detected of a potential site, which is next to an already glycosylated site, but only one amino acid is needed in between two glycosylation sites. Ser-5 is the preferred glycosylation site in Muc5Ac peptide GTTPSPVPTTSTTSAP into which up to four GalNAcs can be attached. Only the threonine residues are detected as pontential glycosylation sites in Muc1a APPAHGVTSAPDTRPAPGC and Muc1a' AHGVTSAPDTR peptides. Transferase activity is restricted to UDP-GalNAc as a donor, and none of the nucleotide sugars UDP-Gal, UDP-GlcNAc, GDP-fucose, UDP-xylose, UDP-glucuronic acid or CMP-neuraminic acid are utilized as donors. The sequence is that of Polypeptide N-acetylgalactosaminyltransferase from Biomphalaria glabrata (Bloodfluke planorb).